The chain runs to 249 residues: Coproheme decarboxylase (249 aa).

Residues Arg-131, 145-149, His-172, and Gln-185 contribute to the Fe-coproporphyrin III site; that span reads YPMDK. Residue Tyr-145 is part of the active site.

The protein belongs to the ChdC family. Type 1 subfamily. Requires Fe-coproporphyrin III as cofactor.

The catalysed reaction is Fe-coproporphyrin III + 2 H2O2 + 2 H(+) = heme b + 2 CO2 + 4 H2O. It catalyses the reaction Fe-coproporphyrin III + H2O2 + H(+) = harderoheme III + CO2 + 2 H2O. The enzyme catalyses harderoheme III + H2O2 + H(+) = heme b + CO2 + 2 H2O. It functions in the pathway porphyrin-containing compound metabolism; protoheme biosynthesis. Functionally, involved in coproporphyrin-dependent heme b biosynthesis. Catalyzes the decarboxylation of Fe-coproporphyrin III (coproheme) to heme b (protoheme IX), the last step of the pathway. The reaction occurs in a stepwise manner with a three-propionate intermediate. The sequence is that of Coproheme decarboxylase from Staphylococcus haemolyticus (strain JCSC1435).